The sequence spans 337 residues: GTPase Obg (337 aa).

Residues 4–162 (SNFIDYVKVC…AWVILELKVL (159 aa)) form the Obg domain. The region spanning 163–329 (ADVGLVGFPN…LKDLLWTTMN (167 aa)) is the OBG-type G domain. Residues 169–176 (GFPNAGKS), 194–198 (FTTLA), 216–219 (DIPG), 283–286 (SKSD), and 310–312 (SSY) contribute to the GTP site. Positions 176 and 196 each coordinate Mg(2+).

Belongs to the TRAFAC class OBG-HflX-like GTPase superfamily. OBG GTPase family. In terms of assembly, monomer. Mg(2+) serves as cofactor.

It is found in the cytoplasm. Functionally, an essential GTPase which binds GTP, GDP and possibly (p)ppGpp with moderate affinity, with high nucleotide exchange rates and a fairly low GTP hydrolysis rate. Plays a role in control of the cell cycle, stress response, ribosome biogenesis and in those bacteria that undergo differentiation, in morphogenesis control. This is GTPase Obg from Cytophaga hutchinsonii (strain ATCC 33406 / DSM 1761 / CIP 103989 / NBRC 15051 / NCIMB 9469 / D465).